Consider the following 311-residue polypeptide: MGFPRGDVLSILDYSRENLEYLFLVADQMEKYLSEKKKLHLLDGYIVALAFLEPSTRTMYSFQSATYRLGGKTLVFTSETATSLAKGENFADTIRMLDSYSDLIVIRSKYEGTARYAAELAENPVINGGDGRHEHPTQAMIDLYTMYKIFGGIDGLTIGILGDLKYARTITSFLYGLTRFKPRKVYLISPGILRLREEVRNKIAELGLSFEETTSLQDVIDELDVLYVTRIQKERYPDPIEYERVKNLYRISIDTLRNVKKEFRILHPLPKIDEIDYRVDETPYAAYFYQAKLGVPLRMALLSLVLGVWRG.

Carbamoyl phosphate-binding residues include R57 and T58. An L-aspartate-binding site is contributed by K86. Positions 107, 135, and 138 each coordinate carbamoyl phosphate. R168 and R230 together coordinate L-aspartate. Positions 269 and 270 each coordinate carbamoyl phosphate.

This sequence belongs to the aspartate/ornithine carbamoyltransferase superfamily. ATCase family. As to quaternary structure, heterooligomer of catalytic and regulatory chains.

The catalysed reaction is carbamoyl phosphate + L-aspartate = N-carbamoyl-L-aspartate + phosphate + H(+). The protein operates within pyrimidine metabolism; UMP biosynthesis via de novo pathway; (S)-dihydroorotate from bicarbonate: step 2/3. Catalyzes the condensation of carbamoyl phosphate and aspartate to form carbamoyl aspartate and inorganic phosphate, the committed step in the de novo pyrimidine nucleotide biosynthesis pathway. This Staphylothermus marinus (strain ATCC 43588 / DSM 3639 / JCM 9404 / F1) protein is Aspartate carbamoyltransferase catalytic subunit.